The primary structure comprises 704 residues: MEQERHEFSIDWAGRKLTVETGQLAKQANGAVLVRYGDTAVLSTATASKEPKDLPFFPLTVNYEERLYAAGKIPGGFIKREGRPSEKAILASRLIDRPIRPLFPEGFRNEVQVISIVMSVDQDCSSEMAAMVGSSLALSISDIPFEGPIAGVTVGRIDGQFVINPTQDQLEKSDIHLVVAGTKDAINMVEAGAEEVPEDVMLEAIMFGHNEIKRLIEFQEKIAAEVGKSKTDVVLKQVDPMLEQEVRVKAEEDLKQAVQVPEKHARQDAIEAVMDKVLETYEDNEDVPLSEVNEILHKIVKEEVRRLITVEKIRPDGREIDEIRPLSSQVGILPRTHGSGLFTRGQTQALSICTLGALGDVQILDGLGIEESKRFMHHYNFPQFSVGETGPIRGPGRREIGHGALGERALEPVIPSEQDFPYTIRLVSEVLESNGSTSQASICASTLAMMDAGVPIKAPVAGIAMGLVKQDEHVSVLTDIQGMEDALGDMDFKVAGTRKGVTALQMDIKISGIDRAILEQALEQARKGRMIILDNMLEAISESRSELSPYAPKILTMTINPDKIRDVIGPSGKMINKIIEDTGVKIDIEQDGTIYISSADTNMNNKAREIIEDIVREVEVGQMYLGTVKRIEKFGAFVELFKGKDGLVHISQLAEERVNKVEDVVKIGDEILVKVMEIDNQGRVNLSRKAVLKEQKKAEEQNQK.

Residues Asp485 and Asp491 each contribute to the Mg(2+) site. A KH domain is found at 552–611; the sequence is PKILTMTINPDKIRDVIGPSGKMINKIIEDTGVKIDIEQDGTIYISSADTNMNNKAREII. The S1 motif domain occupies 621 to 689; it reads GQMYLGTVKR…NQGRVNLSRK (69 aa).

The protein belongs to the polyribonucleotide nucleotidyltransferase family. Mg(2+) serves as cofactor.

It localises to the cytoplasm. The catalysed reaction is RNA(n+1) + phosphate = RNA(n) + a ribonucleoside 5'-diphosphate. Involved in mRNA degradation. Catalyzes the phosphorolysis of single-stranded polyribonucleotides processively in the 3'- to 5'-direction. The protein is Polyribonucleotide nucleotidyltransferase of Halalkalibacterium halodurans (strain ATCC BAA-125 / DSM 18197 / FERM 7344 / JCM 9153 / C-125) (Bacillus halodurans).